Here is a 78-residue protein sequence, read N- to C-terminus: Large ribosomal subunit protein eL20 (78 aa).

The protein belongs to the eukaryotic ribosomal protein eL20 family. Part of the 50S ribosomal subunit. Binds 23S rRNA.

This chain is Large ribosomal subunit protein eL20, found in Pyrobaculum arsenaticum (strain DSM 13514 / JCM 11321 / PZ6).